Here is a 330-residue protein sequence, read N- to C-terminus: Aspartate--ammonia ligase (330 aa).

The protein belongs to the class-II aminoacyl-tRNA synthetase family. AsnA subfamily.

The protein resides in the cytoplasm. The catalysed reaction is L-aspartate + NH4(+) + ATP = L-asparagine + AMP + diphosphate + H(+). The protein operates within amino-acid biosynthesis; L-asparagine biosynthesis; L-asparagine from L-aspartate (ammonia route): step 1/1. This chain is Aspartate--ammonia ligase, found in Escherichia coli O7:K1 (strain IAI39 / ExPEC).